A 320-amino-acid chain; its full sequence is Cytochrome f (320 aa).

An N-terminal signal peptide occupies residues 1–35 (MQNRNTFSWVKEEMTRFISVSIMIYVITRTSISNA). Positions 36, 56, 59, and 60 each coordinate heme. A helical transmembrane segment spans residues 286 to 306 (VQGLLFFLASVILAQIFLVLK).

It belongs to the cytochrome f family. As to quaternary structure, the 4 large subunits of the cytochrome b6-f complex are cytochrome b6, subunit IV (17 kDa polypeptide, petD), cytochrome f and the Rieske protein, while the 4 small subunits are PetG, PetL, PetM and PetN. The complex functions as a dimer. Heme is required as a cofactor.

Its subcellular location is the plastid. It localises to the chloroplast thylakoid membrane. Component of the cytochrome b6-f complex, which mediates electron transfer between photosystem II (PSII) and photosystem I (PSI), cyclic electron flow around PSI, and state transitions. In Calycanthus floridus var. glaucus (Eastern sweetshrub), this protein is Cytochrome f.